The sequence spans 372 residues: Peptidyl-prolyl cis-trans isomerase D (372 aa).

The region spanning 9–175 (FFDISIGGKP…KEVKIEDCGV (167 aa)) is the PPIase cyclophilin-type domain. TPR repeat units follow at residues 220–253 (VEAVKEIGTKQFKEKNFEVALVKYEKSSQMLKQY), 271–304 (VSLFLNIALVSLKSKNYSRTLSAATEALHADNTD), and 309–342 (AKALYRRGLAYYYTKNAEMAVTDLELATTYQPHD).

Belongs to the cyclophilin-type PPIase family. PPIase D subfamily.

The protein localises to the cytoplasm. The enzyme catalyses [protein]-peptidylproline (omega=180) = [protein]-peptidylproline (omega=0). Its function is as follows. PPIases accelerate the folding of proteins. It catalyzes the cis-trans isomerization of proline imidic peptide bonds in oligopeptides. This Kluyveromyces lactis (strain ATCC 8585 / CBS 2359 / DSM 70799 / NBRC 1267 / NRRL Y-1140 / WM37) (Yeast) protein is Peptidyl-prolyl cis-trans isomerase D (CPR6).